We begin with the raw amino-acid sequence, 354 residues long: Chorismate synthase (354 aa).

R48 serves as a coordination point for NADP(+). Residues 125–127, 239–240, G280, 295–299, and R321 each bind FMN; these read RSS, NA, and KPVAT.

Belongs to the chorismate synthase family. As to quaternary structure, homotetramer. It depends on FMNH2 as a cofactor.

The catalysed reaction is 5-O-(1-carboxyvinyl)-3-phosphoshikimate = chorismate + phosphate. The protein operates within metabolic intermediate biosynthesis; chorismate biosynthesis; chorismate from D-erythrose 4-phosphate and phosphoenolpyruvate: step 7/7. Functionally, catalyzes the anti-1,4-elimination of the C-3 phosphate and the C-6 proR hydrogen from 5-enolpyruvylshikimate-3-phosphate (EPSP) to yield chorismate, which is the branch point compound that serves as the starting substrate for the three terminal pathways of aromatic amino acid biosynthesis. This reaction introduces a second double bond into the aromatic ring system. The sequence is that of Chorismate synthase from Christiangramia forsetii (strain DSM 17595 / CGMCC 1.15422 / KT0803) (Gramella forsetii).